A 447-amino-acid chain; its full sequence is Argininosuccinate synthase (447 aa).

ATP contacts are provided by residues 17 to 25 (AFSGGLDTS) and A43. Residue Y99 coordinates L-citrulline. 2 residues coordinate ATP: G129 and T131. T131, N135, and D136 together coordinate L-aspartate. N135 contacts L-citrulline. Position 136 (D136) interacts with ATP. Residues R139 and S192 each contribute to the L-citrulline site. D194 lines the ATP pocket. The L-citrulline site is built by T201, E203, and E280.

The protein belongs to the argininosuccinate synthase family. Type 2 subfamily. Homotetramer.

Its subcellular location is the cytoplasm. The catalysed reaction is L-citrulline + L-aspartate + ATP = 2-(N(omega)-L-arginino)succinate + AMP + diphosphate + H(+). It participates in amino-acid biosynthesis; L-arginine biosynthesis; L-arginine from L-ornithine and carbamoyl phosphate: step 2/3. In Shigella dysenteriae serotype 1 (strain Sd197), this protein is Argininosuccinate synthase.